Consider the following 841-residue polypeptide: Translation initiation factor IF-2 (841 aa).

The segment at Q94–V258 is disordered. Residues S96–R136 show a composition bias toward basic and acidic residues. A compositionally biased stretch (low complexity) spans Q137–A173. 3 stretches are compositionally biased toward basic and acidic residues: residues D174–R194, D200–P217, and T225–R234. Positions R235–A248 are enriched in basic residues. The 170-residue stretch at S341 to K510 folds into the tr-type G domain. The tract at residues G350 to T357 is G1. G350–T357 contributes to the GTP binding site. Residues G375–H379 are G2. The G3 stretch occupies residues D396–G399. Residues D396–H400 and N450–D453 each bind GTP. The G4 stretch occupies residues N450–D453. Positions S486–K488 are G5.

The protein belongs to the TRAFAC class translation factor GTPase superfamily. Classic translation factor GTPase family. IF-2 subfamily.

It is found in the cytoplasm. Its function is as follows. One of the essential components for the initiation of protein synthesis. Protects formylmethionyl-tRNA from spontaneous hydrolysis and promotes its binding to the 30S ribosomal subunits. Also involved in the hydrolysis of GTP during the formation of the 70S ribosomal complex. This chain is Translation initiation factor IF-2, found in Pseudomonas fluorescens (strain SBW25).